Reading from the N-terminus, the 265-residue chain is 3-methyl-2-oxobutanoate hydroxymethyltransferase (265 aa).

The Mg(2+) site is built by Asp41 and Asp80. 3-methyl-2-oxobutanoate-binding positions include 41 to 42 (DS), Asp80, and Lys110. Glu112 provides a ligand contact to Mg(2+). The active-site Proton acceptor is Glu179.

This sequence belongs to the PanB family. In terms of assembly, homodecamer; pentamer of dimers. Mg(2+) serves as cofactor.

Its subcellular location is the cytoplasm. The enzyme catalyses 3-methyl-2-oxobutanoate + (6R)-5,10-methylene-5,6,7,8-tetrahydrofolate + H2O = 2-dehydropantoate + (6S)-5,6,7,8-tetrahydrofolate. It functions in the pathway cofactor biosynthesis; (R)-pantothenate biosynthesis; (R)-pantoate from 3-methyl-2-oxobutanoate: step 1/2. Catalyzes the reversible reaction in which hydroxymethyl group from 5,10-methylenetetrahydrofolate is transferred onto alpha-ketoisovalerate to form ketopantoate. The sequence is that of 3-methyl-2-oxobutanoate hydroxymethyltransferase from Pseudothermotoga lettingae (strain ATCC BAA-301 / DSM 14385 / NBRC 107922 / TMO) (Thermotoga lettingae).